Here is a 252-residue protein sequence, read N- to C-terminus: Geranylgeranylglyceryl phosphate synthase (252 aa).

Asp-22 and Ser-51 together coordinate Mg(2+). Sn-glycerol 1-phosphate is bound by residues 170–176, 201–202, and 223–224; these read YFEAGSG, GG, and GS.

It belongs to the GGGP/HepGP synthase family. Group II subfamily. Requires Mg(2+) as cofactor.

The protein localises to the cytoplasm. It carries out the reaction sn-glycerol 1-phosphate + (2E,6E,10E)-geranylgeranyl diphosphate = sn-3-O-(geranylgeranyl)glycerol 1-phosphate + diphosphate. The protein operates within membrane lipid metabolism; glycerophospholipid metabolism. In terms of biological role, prenyltransferase that catalyzes the transfer of the geranylgeranyl moiety of geranylgeranyl diphosphate (GGPP) to the C3 hydroxyl of sn-glycerol-1-phosphate (G1P). This reaction is the first ether-bond-formation step in the biosynthesis of archaeal membrane lipids. In Thermoplasma volcanium (strain ATCC 51530 / DSM 4299 / JCM 9571 / NBRC 15438 / GSS1), this protein is Geranylgeranylglyceryl phosphate synthase.